Reading from the N-terminus, the 177-residue chain is Protein C (177 aa).

Residues 1 to 10 show a composition bias toward polar residues; it reads MSTKAWNASR. A disordered region spans residues 1 to 38; it reads MSTKAWNASRLSGPDPSTPWSLRKPLQHGSRPPKGKRL.

This sequence belongs to the morbillivirus protein C family.

The protein is Protein C (P/V/C) of Rinderpest virus (strain RBOK) (RDV).